The chain runs to 886 residues: Microsomal triacylglycerol transfer protein (886 aa).

The N-terminal stretch at 1 to 27 (MENKNKKCLRTLLLLALFLGLLEDGKT) is a signal peptide. Residues 30–653 (IAPNSQQIFK…SQASSFKLGI (624 aa)) form the Vitellogenin domain. Asn358, Asn484, Asn502, and Asn616 each carry an N-linked (GlcNAc...) asparagine glycan.

The protein localises to the endoplasmic reticulum. Its subcellular location is the golgi apparatus. It catalyses the reaction a 1,2-diacyl-sn-glycero-3-phosphocholine(in) = a 1,2-diacyl-sn-glycero-3-phosphocholine(out). The catalysed reaction is a 1,2-diacyl-sn-glycero-3-phosphoethanolamine(in) = a 1,2-diacyl-sn-glycero-3-phosphoethanolamine(out). In terms of biological role, catalyzes the transport of phospholipids such as phosphatidylethanolamine (1,2-diacyl-sn-glycero-3-phosphoethanolamine) and phosphatidylcholine (1,2-diacyl-sn-glycero-3-phosphocholine) between membranes. Required for the assembly and secretion of plasma lipoproteins that contain apolipoprotein B. In Drosophila melanogaster (Fruit fly), this protein is Microsomal triacylglycerol transfer protein.